Reading from the N-terminus, the 310-residue chain is p-hydroxybenzoic acid efflux pump subunit AaeA (310 aa).

A helical transmembrane segment spans residues 12–32 (AITVILVILAFVAIFRAWVYY).

It belongs to the membrane fusion protein (MFP) (TC 8.A.1) family.

The protein localises to the cell inner membrane. Forms an efflux pump with AaeB. In Klebsiella pneumoniae (strain 342), this protein is p-hydroxybenzoic acid efflux pump subunit AaeA.